Reading from the N-terminus, the 377-residue chain is T-protein (377 aa).

The Chorismate mutase domain occupies 1-92 (MSFMEALKDL…ESYANENQFG (92 aa)). Residues 101 to 364 (HKIVIVGGYG…DYSEQFLKES (264 aa)) enclose the Prephenate/arogenate dehydrogenase domain.

In the C-terminal section; belongs to the prephenate/arogenate dehydrogenase family.

It is found in the cytoplasm. It carries out the reaction chorismate = prephenate. It catalyses the reaction prephenate + NAD(+) = 3-(4-hydroxyphenyl)pyruvate + CO2 + NADH. Its pathway is amino-acid biosynthesis; L-tyrosine biosynthesis; (4-hydroxyphenyl)pyruvate from prephenate (NAD(+) route): step 1/1. It participates in metabolic intermediate biosynthesis; prephenate biosynthesis; prephenate from chorismate: step 1/1. The sequence is that of T-protein (tyrA) from Haemophilus influenzae (strain ATCC 51907 / DSM 11121 / KW20 / Rd).